The following is a 426-amino-acid chain: 3-phosphoshikimate 1-carboxyvinyltransferase (426 aa).

Lysine 20, serine 21, and arginine 25 together coordinate 3-phosphoshikimate. Residue lysine 20 participates in phosphoenolpyruvate binding. Phosphoenolpyruvate is bound by residues glycine 92 and arginine 120. 3-phosphoshikimate contacts are provided by serine 166, glutamine 168, aspartate 312, and lysine 339. Glutamine 168 is a binding site for phosphoenolpyruvate. The active-site Proton acceptor is aspartate 312. Residues arginine 343 and arginine 385 each contribute to the phosphoenolpyruvate site.

It belongs to the EPSP synthase family. Monomer.

The protein resides in the cytoplasm. The catalysed reaction is 3-phosphoshikimate + phosphoenolpyruvate = 5-O-(1-carboxyvinyl)-3-phosphoshikimate + phosphate. Its pathway is metabolic intermediate biosynthesis; chorismate biosynthesis; chorismate from D-erythrose 4-phosphate and phosphoenolpyruvate: step 6/7. In terms of biological role, catalyzes the transfer of the enolpyruvyl moiety of phosphoenolpyruvate (PEP) to the 5-hydroxyl of shikimate-3-phosphate (S3P) to produce enolpyruvyl shikimate-3-phosphate and inorganic phosphate. The protein is 3-phosphoshikimate 1-carboxyvinyltransferase of Enterococcus faecalis (strain ATCC 700802 / V583).